The sequence spans 86 residues: MRKDIHPDYRPVVFLDTTTGYKFLSGSTKASKETIEFEGETYPLVRVEISSDSHPFYTGRQKFTQADGRVDRFNKKYGLKDANAAK.

The protein belongs to the bacterial ribosomal protein bL31 family. Type B subfamily. As to quaternary structure, part of the 50S ribosomal subunit.

The chain is Large ribosomal subunit protein bL31B from Streptococcus equi subsp. zooepidemicus (strain H70).